Here is a 523-residue protein sequence, read N- to C-terminus: Bifunctional purine biosynthesis protein PurH (523 aa).

Residues 4 to 152 enclose the MGS-like domain; it reads DHIRRPIRRA…KNHPSVAVVT (149 aa).

The protein belongs to the PurH family.

It catalyses the reaction (6R)-10-formyltetrahydrofolate + 5-amino-1-(5-phospho-beta-D-ribosyl)imidazole-4-carboxamide = 5-formamido-1-(5-phospho-D-ribosyl)imidazole-4-carboxamide + (6S)-5,6,7,8-tetrahydrofolate. The catalysed reaction is IMP + H2O = 5-formamido-1-(5-phospho-D-ribosyl)imidazole-4-carboxamide. Its pathway is purine metabolism; IMP biosynthesis via de novo pathway; 5-formamido-1-(5-phospho-D-ribosyl)imidazole-4-carboxamide from 5-amino-1-(5-phospho-D-ribosyl)imidazole-4-carboxamide (10-formyl THF route): step 1/1. It functions in the pathway purine metabolism; IMP biosynthesis via de novo pathway; IMP from 5-formamido-1-(5-phospho-D-ribosyl)imidazole-4-carboxamide: step 1/1. This is Bifunctional purine biosynthesis protein PurH from Mycobacterium ulcerans (strain Agy99).